A 301-amino-acid polypeptide reads, in one-letter code: MKIAVLSRNPRLYSTRRLVEAGTQRGHEMVVIDTLRAYMNIASHKPQIHYRGKPLEGFDAVIPRIGASVTFYGCAVLRQFEMMGVYPLNESVAIARSRDKLRSLQLLSRRGIGLPITGFAHSPDDIPDLIQMVNGAPLVIKVLEGTQGIGVVLCETPQAAESVIEAFMGLKQNIMVQEYIKEAGGADIRCFVVGDKVIASMKRQAKPGEFRSNLHRGGVASLIKITPEERITAIRAAKVMGLSVAGVDILRSNHGPLVMEVNSSPGLEGIEVTTGKNVAGMIIEHLEKNGGPNQTRTKGKG.

An ATP-grasp domain is found at 104-287 (LQLLSRRGIG…VAGMIIEHLE (184 aa)). Residues lysine 141, 178–179 (EY), aspartate 187, and 211–213 (RSN) each bind ATP. Mg(2+)-binding residues include aspartate 248, glutamate 260, and asparagine 262. Aspartate 248, glutamate 260, and asparagine 262 together coordinate Mn(2+).

This sequence belongs to the RimK family. The cofactor is Mg(2+). Mn(2+) is required as a cofactor.

The protein is Probable alpha-L-glutamate ligase of Pseudomonas putida (strain ATCC 700007 / DSM 6899 / JCM 31910 / BCRC 17059 / LMG 24140 / F1).